The primary structure comprises 95 residues: Selenoprotein K (95 aa).

A helical membrane pass occupies residues 20-42 (LSFLTDMFWGITDFIVMFFQSII). The tract at residues 48 to 95 (RRGCQNSSSRTRFDDGRGPPGNPRRRMGRIDHNSGPNAPPMSGGGUGR) is disordered. Residue selenocysteine 93 is a non-standard amino acid, selenocysteine.

This sequence belongs to the selenoprotein K family.

It is found in the endoplasmic reticulum membrane. The protein resides in the cell membrane. In terms of biological role, required for Ca(2+) flux in immune cells and plays a role in T-cell proliferation and in T-cell and neutrophil migration. Involved in endoplasmic reticulum-associated degradation (ERAD) of soluble glycosylated proteins. Required for cell surface expression of CD36 and involved in macrophage uptake of low-density lipoprotein and in foam cell formation. Required for palmitoylation. The sequence is that of Selenoprotein K (selenok) from Xenopus tropicalis (Western clawed frog).